The chain runs to 450 residues: tRNA modification GTPase MnmE (450 aa).

Positions 23, 80, and 123 each coordinate (6S)-5-formyl-5,6,7,8-tetrahydrofolate. A TrmE-type G domain is found at 219 to 372; it reads GLHVVLAGKP…LRQRLLQLAG (154 aa). Asparagine 229 contacts K(+). Residues 229 to 234, 248 to 254, 273 to 276, and 353 to 355 each bind GTP; these read NVGKSS, TPIAGTT, DTAG, and SAR. Mg(2+) is bound at residue serine 233. Positions 248, 250, and 253 each coordinate K(+). A Mg(2+)-binding site is contributed by threonine 254. Lysine 450 lines the (6S)-5-formyl-5,6,7,8-tetrahydrofolate pocket.

Belongs to the TRAFAC class TrmE-Era-EngA-EngB-Septin-like GTPase superfamily. TrmE GTPase family. As to quaternary structure, homodimer. Heterotetramer of two MnmE and two MnmG subunits. K(+) is required as a cofactor.

Its subcellular location is the cytoplasm. Functionally, exhibits a very high intrinsic GTPase hydrolysis rate. Involved in the addition of a carboxymethylaminomethyl (cmnm) group at the wobble position (U34) of certain tRNAs, forming tRNA-cmnm(5)s(2)U34. The protein is tRNA modification GTPase MnmE of Bordetella parapertussis (strain 12822 / ATCC BAA-587 / NCTC 13253).